The chain runs to 717 residues: MDKLYVLVGFILMNILKKVFLSTIFVSIIFCLGILFLVKSNLGLRTIFFLSHYLVPELEVDQLIGTLNNFKLINVKYKSKNILLTIKVLQLNFIVHIFKKFYIDVNLVTCKNVNFFIKNINDVNFKTNGVFPLNLKSKFFSYFFIFFKDIRFYNFTANVDGVELFTNFFSSKGYWNKQFLELEFFKTDVVSINNFYCFDSTNNYCRFNSRNFLVCCRQYLKMLFNYFKKGNFDTFVNIDIANFSCNKIYLEDNKNISISKFFINFRIFKNSVNIKRLFFVFRRMFKVRINGFININQNYINLTINCVNKNEIYGSSSNIKIIIHGLWLSILKINFYIDKININFLIKRILMPEKLIFKCKLRLSNLNSYIHRKNFSYLNNFKLEIFTNSSEYFFQSYSVLNIKDVFPIKFCLLGIGNYKNIFLKLIKFRIFQKKILCNYEWKYCSNRDLVQKFLLNKFFDNLKKTKLLINIKKIILNNDFNEKILLLSSNFLNIRDKYIFTDVHIISGKNSFSMRSDFNSFLNLNVFFSIKDLKFFFPNFDGKFDIDVKIFRSINYYHAICKFIGNKLDFNIFKIVNIKFLIDINSKDFLNTIFLSVTKLFFGNLYVNHVFFKIKNEHDKRYLATICLSSYNNFMRLILDKYFNINVFIQTNVLRKINYFKFYLDSNVNKTVFALISYLFSNYYKKININYVSFFKHSIKSKFVKFLNKFIYVKQIF.

The chain crosses the membrane as a helical span at residues 19–38 (VFLSTIFVSIIFCLGILFLV).

The protein to E.coli YtfN.

The protein localises to the membrane. This is an uncharacterized protein from Buchnera aphidicola subsp. Baizongia pistaciae (strain Bp).